Here is a 522-residue protein sequence, read N- to C-terminus: F-box only protein 7 (522 aa).

A ubiquitin-like region spans residues 1–88 (MRLRVRLLKR…QDDIPAPNIP (88 aa)). The interval 85-144 (PNIPSSTDSEHSSLQNNEQPSLATSSNQTSMQDEQPSDSFQGQAAQSGVWNDDSMLGPSQ) is disordered. Polar residues predominate over residues 87 to 133 (IPSSTDSEHSSLQNNEQPSLATSSNQTSMQDEQPSDSFQGQAAQSGV). Residues 92–129 (DSEHSSLQNNEQPSLATSSNQTSMQDEQPSDSFQGQAA) are important for interaction with PINK1. The segment at 129 to 169 (AQSGVWNDDSMLGPSQNFEAESIQDNAHMAEGTGFYPSEPM) is important for interaction with CDK6. The interval 180-324 (PHSLETLYQS…PLLAFTRQAL (145 aa)) is important for dimerization and interaction with PSMF1. In terms of domain architecture, F-box spans 329-375 (VFGLVVLPLELKLRIFRLLDVRSVLSLSAVCRDLFTASNDPLLWRFL). The important for interaction with CDK6 stretch occupies residues 381 to 522 (RDNTVRVQDT…RPTDGRLSFM (142 aa)). 2 positions are modified to omega-N-methylarginine: Arg-432 and Arg-451. Positions 481-484 (RFDP) match the RFDP motif motif. Residues 483 to 522 (DPVGPLPGPNPILPGRGGPNDRFPFRPSRGRPTDGRLSFM) form a disordered region. Residue Arg-518 is modified to Asymmetric dimethylarginine.

Part of the SCF (SKP1-CUL1-F-box) E3 ubiquitin-protein ligase complex SCF(FBXO7) formed of CUL1, SKP1, RBX1 and FBXO7. Interacts via its C-terminal proline-rich region with DLGAP5. Interacts with BIRC2. Interacts with CDK6 and promotes its interaction with D-type cyclin. Interacts with PSMF1. In terms of assembly, interacts (via the N-terminal Ubl domain) with PRKN. Interact (via N-terminal region) with PINK1. As to quaternary structure, interact (via N-terminal region) with PINK1.

The protein localises to the cytoplasm. Its subcellular location is the nucleus. The protein resides in the mitochondrion. It localises to the cytosol. It functions in the pathway protein modification; protein ubiquitination. Functionally, substrate recognition component of a SCF (SKP1-CUL1-F-box protein) E3 ubiquitin-protein ligase complex which mediates the ubiquitination and subsequent proteasomal degradation of target proteins and plays a role in several biological processes such as cell cycle, cell proliferation, or maintenance of chromosome stability. Recognizes and ubiquitinates BIRC2 and the cell cycle regulator DLGAP5. Plays a role downstream of PINK1 in the clearance of damaged mitochondria via selective autophagy (mitophagy) by targeting PRKN to dysfunctional depolarized mitochondria. Promotes MFN1 ubiquitination. Mediates the ubiquitination and proteasomal degradation of UXT isoform 2, thereby impairing the NF-kappa-B signaling pathway. Inhibits NF-kappa-B pathway also by promoting the ubiquitination of TRAF2. Affects the assembly state and activity of the proteasome in the cells including neurons by ubiquitinating the proteasomal subunit PSMA2 via 'Lys-63'-linked polyubiquitin chains. Promotes 'Lys-48'-linked polyubiquitination SIRT7, leading to the hydrogen peroxide-induced cell death. The protein is F-box only protein 7 (FBXO7) of Homo sapiens (Human).